The primary structure comprises 356 residues: Alanine racemase, catabolic (356 aa).

K35 acts as the Proton acceptor; specific for D-alanine in catalysis. K35 is subject to N6-(pyridoxal phosphate)lysine. R130 contacts substrate. Residue Y253 is the Proton acceptor; specific for L-alanine of the active site. M301 is a binding site for substrate.

The protein belongs to the alanine racemase family. It depends on pyridoxal 5'-phosphate as a cofactor.

It carries out the reaction L-alanine = D-alanine. In terms of biological role, isomerizes L-alanine to D-alanine which is then oxidized to pyruvate by DadA. The protein is Alanine racemase, catabolic (dadX) of Escherichia coli (strain K12).